The primary structure comprises 1511 residues: Bifunctional glutamate/proline--tRNA ligase (1511 aa).

The segment at 164–758 is glutamate--tRNA ligase; it reads GTKWDVSENK…SSVLYNRVAA (595 aa). A 'HIGH' region motif is present at residues 204–214; sequence PEASGYLHIGH. Positions 296–315 are disordered; sequence AEQMKAEREQRAESKHRQNS. A compositionally biased stretch (basic and acidic residues) spans 299 to 315; it reads MKAEREQRAESKHRQNS. Residue K300 is modified to N6-acetyllysine; alternate. Position 300 is an N6-malonyllysine; alternate (K300). A Phosphothreonine modification is found at T355. N6-acetyllysine is present on K417. Positions 432–436 match the 'KMSKS' region motif; it reads VLSKR. S434 bears the Phosphoserine mark. N6-acetyllysine occurs at positions 498, 535, 542, and 637. Residues 708–728 show a composition bias toward basic and acidic residues; it reads KEMPTSGSKEKTKAEPLKKET. Residues 708-741 form a disordered region; sequence KEMPTSGSKEKTKAEPLKKETSSAPKEGPVPAVS. Residue S746 is modified to Phosphoserine. A WHEP-TRS 1 domain is found at 748 to 804; the sequence is ESSVLYNRVAAQGDVVRELKAKKAAKEDVDAAVKQLLALKAEYKQKTGQEYKPGNPP. The interval 759-955 is 3 X 57 AA approximate repeats; the sequence is QGDVVRELKA…GIEYKPVSAT (197 aa). Residue K787 is modified to N6-acetyllysine. Residues 794 to 823 are disordered; the sequence is TGQEYKPGNPPSAAAQSASTKSLPSAGEDR. Residues 807-816 are compositionally biased toward polar residues; it reads AAQSASTKSL. The 57-residue stretch at 821 to 877 folds into the WHEP-TRS 2 domain; sequence EDRSLYDKIAAQGEVVRKLKAEKAPKAKVTEAVECLLSLKAEYKEKTGKEYVPGQPP. At K860 the chain carries N6-acetyllysine. Disordered stretches follow at residues 868–903 and 952–1015; these read GKEY…AKAL and VSAT…RLGL. A Phosphotyrosine modification is found at Y871. The segment covering 877–890 has biased composition (low complexity); it reads PASQKSQPSPASKA. S885 carries the post-translational modification Phosphoserine; by CDK5. T897 is modified (phosphothreonine). Residues 899 to 955 enclose the WHEP-TRS 3 domain; it reads EAKALFDRVACQGEVVRKLKAEKASKDQVDPAVQELLQLKAQYKSLTGIEYKPVSAT. Positions 957–975 are enriched in basic and acidic residues; it reads SEDKDKKKKEKENKSEKQN. Residues 992-1005 are compositionally biased toward gly residues; the sequence is QGGGLSSSGAGEGQ. S997 bears the Phosphoserine mark. At S998 the chain carries Phosphoserine; by RPS6KB1. S999 carries the phosphoserine modification. Positions 1006 to 1511 are proline--tRNA ligase; it reads GPKKQTRLGL…KFYTLFGRSY (506 aa). Residues 1120–1122 and R1151 each bind L-proline; that span reads TSE. ATP-binding residues include R1151, E1153, R1162, T1163, Q1236, and T1239. The residue at position 1151 (R1151) is an Omega-N-methylarginine. Q1236 provides a ligand contact to Mg(2+). L-proline is bound at residue H1241. ATP-binding residues include T1275 and R1277. The residue at position 1349 (S1349) is a Phosphoserine. Zn(2+) is bound by residues C1447, C1452, C1494, and C1496. K1502 is modified (N6-acetyllysine).

This sequence in the N-terminal section; belongs to the class-I aminoacyl-tRNA synthetase family. Glutamate--tRNA ligase type 2 subfamily. The protein in the C-terminal section; belongs to the class-II aminoacyl-tRNA synthetase family. Homodimer. Part of the aminoacyl-tRNA synthetase multienzyme complex, also know as multisynthetase complex, that is composed of the tRNA ligases for Arg (RARS1), Asp (DARS1), Gln (QARS1), Ile (IARS1), Leu (LARS1), Lys (KARS1), Met (MARS1) the bifunctional ligase for Glu and Pro (EPRS1) and the auxiliary subunits AIMP1/p43, AIMP2/p38 and EEF1E1/p18. Forms a linear complex that contains MARS1, EEF1E1, EPRS1 and AIMP2 that is at the core of the multisubunit complex. Interacts with TARS3. Interacts with DUS2L. Component of the GAIT complex which is composed of EPRS1, RPL13A and GAPDH. Interacts (phosphorylated at Ser-998) with SLC27A1; mediates the translocation of SLC27A1 from the cytoplasm to the plasma membrane thereby increasing the uptake of long-chain fatty acids. In terms of processing, phosphorylated at Ser-998 by RPS6KB1; triggers EPRS1 release from the aminoacyl-tRNA synthetase multienzyme complex. In monocytes, the IFN-gamma-induced phosphorylation at Ser-998 releases EPRS1 from the aminoacyl-tRNA synthetase multienzyme complex, allowing its association with the GAIT complex. Phosphorylation at Ser-998 is specifically required for the RPL13A-mediated interaction of the GAIT complex with eIF4G. Phosphorylation at Ser-998 by RPS6KB1, is also induced by insulin through activation of the mTORC1 signaling pathway and promotes the interaction of EPRS1 with SLC27A1.

The protein localises to the cytoplasm. Its subcellular location is the cytosol. It localises to the membrane. The catalysed reaction is tRNA(Glu) + L-glutamate + ATP = L-glutamyl-tRNA(Glu) + AMP + diphosphate. It catalyses the reaction tRNA(Pro) + L-proline + ATP = L-prolyl-tRNA(Pro) + AMP + diphosphate. Multifunctional protein which primarily functions within the aminoacyl-tRNA synthetase multienzyme complex, also known as multisynthetase complex. Within the complex it catalyzes the attachment of both L-glutamate and L-proline to their cognate tRNAs in a two-step reaction where the amino acid is first activated by ATP to form a covalent intermediate with AMP. Subsequently, the activated amino acid is transferred to the acceptor end of the cognate tRNA to form L-glutamyl-tRNA(Glu) and L-prolyl-tRNA(Pro). Upon interferon-gamma stimulation, EPRS1 undergoes phosphorylation, causing its dissociation from the aminoacyl-tRNA synthetase multienzyme complex. It is recruited to form the GAIT complex, which binds to stem loop-containing GAIT elements found in the 3'-UTR of various inflammatory mRNAs, such as ceruloplasmin. The GAIT complex inhibits the translation of these mRNAs, allowing interferon-gamma to redirect the function of EPRS1 from protein synthesis to translation inhibition in specific cell contexts. Furthermore, it can function as a downstream effector in the mTORC1 signaling pathway, by promoting the translocation of SLC27A1 from the cytoplasm to the plasma membrane where it mediates the uptake of long-chain fatty acid by adipocytes. Thereby, EPRS1 also plays a role in fat metabolism and more indirectly influences lifespan. The protein is Bifunctional glutamate/proline--tRNA ligase of Cricetulus griseus (Chinese hamster).